Reading from the N-terminus, the 468-residue chain is Aldehyde dehydrogenase family 3 member B1 (468 aa).

Met1 is subject to N-acetylmethionine. 188–193 is a binding site for NAD(+); sequence GSPRVG. Catalysis depends on residues Glu210 and Cys244. The S-palmitoyl cysteine moiety is linked to residue Cys463. Cysteine methyl ester is present on Cys465. Residue Cys465 is the site of S-geranylgeranyl cysteine attachment. A propeptide spans 466-468 (removed in mature form); sequence TLL.

This sequence belongs to the aldehyde dehydrogenase family. In terms of processing, dually lipidated in the C-terminus; prenylation occurs prior to, and is a prerequisite for palmitoylation. It is also required for activity towards long-chain substrates. As to expression, highest expression in kidney and lung.

It is found in the cell membrane. The enzyme catalyses an aldehyde + NADP(+) + H2O = a carboxylate + NADPH + 2 H(+). It catalyses the reaction an aldehyde + NAD(+) + H2O = a carboxylate + NADH + 2 H(+). It carries out the reaction a long-chain fatty aldehyde + NAD(+) + H2O = a long-chain fatty acid + NADH + 2 H(+). The catalysed reaction is a medium-chain fatty aldehyde + NAD(+) + H2O = a medium-chain fatty acid + NADH + 2 H(+). The enzyme catalyses octanal + NAD(+) + H2O = octanoate + NADH + 2 H(+). It catalyses the reaction nonanal + NAD(+) + H2O = nonanoate + NADH + 2 H(+). It carries out the reaction hexadecanoate + NADH + 2 H(+) = hexadecanal + NAD(+) + H2O. The catalysed reaction is (2E)-octenal + NAD(+) + H2O = (2E)-octenoate + NADH + 2 H(+). The enzyme catalyses (E)-non-2-enal + NAD(+) + H2O = (E)-non-2-enoate + NADH + 2 H(+). It catalyses the reaction (E)-4-hydroxynon-2-enal + NAD(+) + H2O = (E)-4-hydroxynon-2-enoate + NADH + 2 H(+). It carries out the reaction (2E)-hexadecenal + NAD(+) + H2O = (E)-hexadec-2-enoate + NADH + 2 H(+). The catalysed reaction is benzaldehyde + NAD(+) + H2O = benzoate + NADH + 2 H(+). The enzyme catalyses a medium-chain fatty aldehyde + NADP(+) + H2O = a medium-chain fatty acid + NADPH + 2 H(+). It catalyses the reaction hexanal + NADP(+) + H2O = hexanoate + NADPH + 2 H(+). It carries out the reaction octanal + NADP(+) + H2O = octanoate + NADPH + 2 H(+). The catalysed reaction is nonanal + NADP(+) + H2O = nonanoate + NADPH + 2 H(+). The enzyme catalyses (2E)-octenal + NADP(+) + H2O = (2E)-octenoate + NADPH + 2 H(+). It catalyses the reaction (E)-non-2-enal + NADP(+) + H2O = (E)-non-2-enoate + NADPH + 2 H(+). It carries out the reaction (E)-4-hydroxynon-2-enal + NADP(+) + H2O = (E)-4-hydroxynon-2-enoate + NADPH + 2 H(+). The catalysed reaction is benzaldehyde + NADP(+) + H2O = benzoate + NADPH + 2 H(+). Its pathway is alcohol metabolism; ethanol degradation; acetate from ethanol: step 2/2. Functionally, oxidizes medium and long chain saturated and unsaturated fatty aldehydes generated in the plasma membrane into non-toxic fatty acids. May have a protective role against the cytotoxicity induced by lipid peroxidation. Short-chain fatty aldehydes are not good substrates. Can use both NADP(+) and NAD(+) as electron acceptor in vitro, however in vivo preference will depend on their tissue levels. Low activity towards acetaldehyde and 3,4-dihydroxyphenylacetaldehyde. Able to metabolize aromatic aldehydes such as benzaldehyde to their acid form. This chain is Aldehyde dehydrogenase family 3 member B1 (ALDH3B1), found in Homo sapiens (Human).